Here is a 190-residue protein sequence, read N- to C-terminus: Probable thymidylate kinase (190 aa).

ATP is bound at residue Gly9–Thr16.

This sequence belongs to the thymidylate kinase family.

It catalyses the reaction dTMP + ATP = dTDP + ADP. The sequence is that of Probable thymidylate kinase (tmk1) from Sulfurisphaera tokodaii (strain DSM 16993 / JCM 10545 / NBRC 100140 / 7) (Sulfolobus tokodaii).